Consider the following 447-residue polypeptide: Argininosuccinate synthase (447 aa).

ATP is bound by residues Ala-17–Ser-25 and Ala-43. Tyr-99 is an L-citrulline binding site. Residues Gly-129 and Thr-131 each coordinate ATP. L-aspartate is bound by residues Thr-131, Asn-135, and Asp-136. Residue Asn-135 coordinates L-citrulline. Asp-136 is a binding site for ATP. L-citrulline-binding residues include Arg-139 and Ser-192. Asp-194 contributes to the ATP binding site. Thr-201, Glu-203, and Glu-280 together coordinate L-citrulline.

The protein belongs to the argininosuccinate synthase family. Type 2 subfamily. As to quaternary structure, homotetramer.

The protein localises to the cytoplasm. The catalysed reaction is L-citrulline + L-aspartate + ATP = 2-(N(omega)-L-arginino)succinate + AMP + diphosphate + H(+). It functions in the pathway amino-acid biosynthesis; L-arginine biosynthesis; L-arginine from L-ornithine and carbamoyl phosphate: step 2/3. This is Argininosuccinate synthase from Salmonella paratyphi B (strain ATCC BAA-1250 / SPB7).